A 658-amino-acid polypeptide reads, in one-letter code: Glycogen debranching enzyme (658 aa).

D336 (nucleophile) is an active-site residue. E371 functions as the Proton donor in the catalytic mechanism.

This sequence belongs to the glycosyl hydrolase 13 family.

The catalysed reaction is Hydrolysis of (1-&gt;6)-alpha-D-glucosidic linkages to branches with degrees of polymerization of three or four glucose residues in limit dextrin.. It participates in glycan degradation; glycogen degradation. Removes maltotriose and maltotetraose chains that are attached by 1,6-alpha-linkage to the limit dextrin main chain, generating a debranched limit dextrin. The protein is Glycogen debranching enzyme of Klebsiella pneumoniae subsp. pneumoniae (strain ATCC 700721 / MGH 78578).